The primary structure comprises 643 residues: DNA gyrase subunit B (643 aa).

Positions 428-542 constitute a Toprim domain; the sequence is SEIFLVEGDS…AGYVYIAQPP (115 aa). Positions 434, 507, and 509 each coordinate Mg(2+).

It belongs to the type II topoisomerase GyrB family. In terms of assembly, heterotetramer, composed of two GyrA and two GyrB chains. In the heterotetramer, GyrA contains the active site tyrosine that forms a transient covalent intermediate with DNA, while GyrB binds cofactors and catalyzes ATP hydrolysis. Mg(2+) serves as cofactor. Requires Mn(2+) as cofactor. Ca(2+) is required as a cofactor.

The protein resides in the cytoplasm. It carries out the reaction ATP-dependent breakage, passage and rejoining of double-stranded DNA.. Functionally, a type II topoisomerase that negatively supercoils closed circular double-stranded (ds) DNA in an ATP-dependent manner to modulate DNA topology and maintain chromosomes in an underwound state. Negative supercoiling favors strand separation, and DNA replication, transcription, recombination and repair, all of which involve strand separation. Also able to catalyze the interconversion of other topological isomers of dsDNA rings, including catenanes and knotted rings. Type II topoisomerases break and join 2 DNA strands simultaneously in an ATP-dependent manner. This Staphylococcus epidermidis (strain ATCC 35984 / DSM 28319 / BCRC 17069 / CCUG 31568 / BM 3577 / RP62A) protein is DNA gyrase subunit B.